Consider the following 572-residue polypeptide: Putative acyl-CoA synthetase CCNA_01223 (572 aa).

This sequence belongs to the ATP-dependent AMP-binding enzyme family.

It functions in the pathway lipid metabolism; sphingolipid metabolism. In terms of biological role, involved in de novo bacterial ceramide synthesis. The chain is Putative acyl-CoA synthetase CCNA_01223 from Caulobacter vibrioides (strain NA1000 / CB15N) (Caulobacter crescentus).